The following is a 150-amino-acid chain: Large ribosomal subunit protein bL9 (150 aa).

This sequence belongs to the bacterial ribosomal protein bL9 family.

Its function is as follows. Binds to the 23S rRNA. The protein is Large ribosomal subunit protein bL9 of Sodalis glossinidius (strain morsitans).